The chain runs to 210 residues: Orotate phosphoribosyltransferase (210 aa).

5-phospho-alpha-D-ribose 1-diphosphate-binding positions include arginine 94, lysine 98, histidine 100, and 120–128; that span reads EDLISTGGS. Serine 124 is an orotate binding site.

It belongs to the purine/pyrimidine phosphoribosyltransferase family. PyrE subfamily. Homodimer. The cofactor is Mg(2+).

It catalyses the reaction orotidine 5'-phosphate + diphosphate = orotate + 5-phospho-alpha-D-ribose 1-diphosphate. Its pathway is pyrimidine metabolism; UMP biosynthesis via de novo pathway; UMP from orotate: step 1/2. In terms of biological role, catalyzes the transfer of a ribosyl phosphate group from 5-phosphoribose 1-diphosphate to orotate, leading to the formation of orotidine monophosphate (OMP). The polypeptide is Orotate phosphoribosyltransferase (Bacillus cereus (strain B4264)).